A 153-amino-acid polypeptide reads, in one-letter code: Actin-related protein 2/3 complex subunit 5-like protein (153 aa).

Position 64 is a phosphoserine (S64).

Belongs to the ARPC5 family. May be a component of the Arp2/3 complex in which it may replace ARPC5.

The protein localises to the cytoplasm. Its subcellular location is the cytoskeleton. In terms of biological role, may function as component of the Arp2/3 complex which is involved in regulation of actin polymerization and together with an activating nucleation-promoting factor (NPF) mediates the formation of branched actin networks. This chain is Actin-related protein 2/3 complex subunit 5-like protein (Arpc5l), found in Rattus norvegicus (Rat).